The following is a 550-amino-acid chain: Protein UshA (550 aa).

An N-terminal signal peptide occupies residues 1 to 25; sequence MKFLKRGVALALLAAFALTTQPAQA. 7 residues coordinate Zn(2+): Asp41, His43, Asp84, Asn116, His217, His252, and Gln254. A disulfide bridge links Cys258 with Cys275. Substrate is bound by residues Phe429 and 498–504; that span reads FNATGGD.

The protein belongs to the 5'-nucleotidase family. Monomer. It depends on Zn(2+) as a cofactor.

It localises to the periplasm. The catalysed reaction is UDP-sugar + H2O = UMP + alpha-D-aldose 1-phosphate.. It carries out the reaction a ribonucleoside 5'-phosphate + H2O = a ribonucleoside + phosphate. Degradation of external UDP-glucose to uridine monophosphate and glucose-1-phosphate, which can then be used by the cell. This chain is Protein UshA (ushA), found in Salmonella pullorum.